The following is a 270-amino-acid chain: Replication protein A 32 kDa subunit (270 aa).

Position 1 is an N-acetylmethionine (methionine 1). Serine 4 and serine 8 each carry phosphoserine; by PRKDC. A disordered region spans residues 20-41; that stretch reads YTQSPGGFGSPTPSQAEKKSRV. Phosphothreonine; by PRKDC is present on threonine 21. Serine 23 is modified (phosphoserine; by CDK2). Position 29 is a phosphoserine; by CDK1 (serine 29). Position 33 is a phosphoserine; by PRKDC (serine 33). Glycyl lysine isopeptide (Lys-Gly) (interchain with G-Cter in ubiquitin) cross-links involve residues lysine 37 and lysine 38. The OB DNA-binding region spans 74–148; that stretch reads VTIVGIIRHA…KSLVAFKIIP (75 aa). A disordered region spans residues 171-192; sequence KPNSQASAGRPSMSNPGMSEPG. An interaction with RAD52, TIPIN, UNG and XPA region spans residues 187-270; that stretch reads GMSEPGNFSG…DDHFKSTDAE (84 aa).

Belongs to the replication factor A protein 2 family. Component of the replication protein A complex (RPA/RP-A), a heterotrimeric complex composed of RPA1, RPA2 and RPA3. Interacts with PRPF19; the PRP19-CDC5L complex is recruited to the sites of DNA repair where it ubiquitinates the replication protein A complex (RPA). Interacts with SERTAD3. Interacts with TIPIN. Interacts with TIMELESS. Interacts with PPP4R2; the interaction is direct, DNA damage-dependent and mediates the recruitment of the PP4 catalytic subunit PPP4C. Interacts (hyperphosphorylated) with RAD51. Interacts with SMARCAL1; the interaction is direct and mediates the recruitment to the RPA complex of SMARCAL1. Interacts with RAD52 and XPA; those interactions are direct and associate RAD52 and XPA to the RPA complex. Interacts with FBH1. Interacts with ETAA1; the interaction is direct and promotes ETAA1 recruitment at stalled replication forks. Interacts with DDI2. Interacts (in unphosphorylated form via N-terminus) with EIF4EBP3; the interaction enhances EIF4EBP3-mediated inhibition of EIF4E-mediated mRNA nuclear export. Interacts with nuclear UNG (isoform 2); this interaction mediates UNG recruitment to RPA-coated single-stranded DNA at stalled replication forks. Differentially phosphorylated throughout the cell cycle, becoming phosphorylated at the G1-S transition and dephosphorylated in late mitosis. Mainly phosphorylated at Ser-23 and Ser-29, by cyclin A-CDK2 and cyclin B-CDK1, respectively during DNA replication and mitosis. Dephosphorylation may require the serine/threonine-protein phosphatase 4. Phosphorylation at Ser-23 and Ser-29 is a prerequisite for further phosphorylation. Becomes hyperphosphorylated on additional residues including Ser-4, Ser-8, Thr-21 and Ser-33 in response to DNA damage. Hyperphosphorylation is mediated by ATM, ATR and PRKDC. Primarily recruited to DNA repair nuclear foci as a hypophosphorylated form it undergoes subsequent hyperphosphorylation, catalyzed by ATR. Hyperphosphorylation is required for RAD51 recruitment to chromatin and efficient DNA repair. Phosphorylation at Thr-21 depends upon RFWD3 presence. In terms of processing, DNA damage-induced 'Lys-63'-linked polyubiquitination by PRPF19 mediates ATRIP recruitment to the RPA complex at sites of DNA damage and activation of ATR. Ubiquitinated by RFWD3 at stalled replication forks in response to DNA damage: ubiquitination by RFWD3 does not lead to degradation by the proteasome and promotes removal of the RPA complex from stalled replication forks, promoting homologous recombination.

The protein localises to the nucleus. Its subcellular location is the PML body. In terms of biological role, as part of the heterotrimeric replication protein A complex (RPA/RP-A), binds and stabilizes single-stranded DNA intermediates, that form during DNA replication or upon DNA stress. It prevents their reannealing and in parallel, recruits and activates different proteins and complexes involved in DNA metabolism. Thereby, it plays an essential role both in DNA replication and the cellular response to DNA damage. In the cellular response to DNA damage, the RPA complex controls DNA repair and DNA damage checkpoint activation. Through recruitment of ATRIP activates the ATR kinase a master regulator of the DNA damage response. It is required for the recruitment of the DNA double-strand break repair factors RAD51 and RAD52 to chromatin in response to DNA damage. Also recruits to sites of DNA damage proteins like XPA and XPG that are involved in nucleotide excision repair and is required for this mechanism of DNA repair. Also plays a role in base excision repair (BER) probably through interaction with UNG. Also recruits SMARCAL1/HARP, which is involved in replication fork restart, to sites of DNA damage. May also play a role in telomere maintenance. This Mus musculus (Mouse) protein is Replication protein A 32 kDa subunit.